Here is a 501-residue protein sequence, read N- to C-terminus: Lysine--tRNA ligase (501 aa).

Mg(2+) contacts are provided by E411 and E418.

Belongs to the class-II aminoacyl-tRNA synthetase family. Homodimer. The cofactor is Mg(2+).

The protein resides in the cytoplasm. It catalyses the reaction tRNA(Lys) + L-lysine + ATP = L-lysyl-tRNA(Lys) + AMP + diphosphate. The sequence is that of Lysine--tRNA ligase from Clostridium perfringens (strain SM101 / Type A).